The primary structure comprises 285 residues: Bifunctional protein FolD (285 aa).

NADP(+) contacts are provided by residues 165-167 and Ser-190; that span reads GRS.

The protein belongs to the tetrahydrofolate dehydrogenase/cyclohydrolase family. Homodimer.

The catalysed reaction is (6R)-5,10-methylene-5,6,7,8-tetrahydrofolate + NADP(+) = (6R)-5,10-methenyltetrahydrofolate + NADPH. It catalyses the reaction (6R)-5,10-methenyltetrahydrofolate + H2O = (6R)-10-formyltetrahydrofolate + H(+). The protein operates within one-carbon metabolism; tetrahydrofolate interconversion. Catalyzes the oxidation of 5,10-methylenetetrahydrofolate to 5,10-methenyltetrahydrofolate and then the hydrolysis of 5,10-methenyltetrahydrofolate to 10-formyltetrahydrofolate. The polypeptide is Bifunctional protein FolD (Burkholderia mallei (strain NCTC 10247)).